A 152-amino-acid chain; its full sequence is Proteolipid protein 2 (152 aa).

N-linked (GlcNAc...) asparagine glycosylation is present at Asn-18. Positions 19 to 137 constitute an MARVEL domain; it reads FSRTRKGILL…DAYVTFPVRQ (119 aa). 3 helical membrane passes run 25 to 45, 48 to 68, and 85 to 105; these read GILL…FSAS, GYSS…VVYM, and FFRT…VLVE. Asn-108 carries an N-linked (GlcNAc...) asparagine glycan. Residues 112–132 traverse the membrane as a helical segment; the sequence is IVAGVLGLIATCLFGYDAYVT.

Enriched in colonic mucosa. The expression of A4 follows a gradient along the crypto-villus axis with the most abundant message occurring in the lower half of the crypt.

It localises to the membrane. Functionally, may play a role in cell differentiation in the intestinal epithelium. The protein is Proteolipid protein 2 (PLP2) of Homo sapiens (Human).